The sequence spans 208 residues: dTTP/UTP pyrophosphatase (208 aa).

Residues 28–48 (DRIHPADIDETPQRAEHPRSL) are disordered. The Proton acceptor role is filled by D79.

The protein belongs to the Maf family. YhdE subfamily. It depends on a divalent metal cation as a cofactor.

It localises to the cytoplasm. The enzyme catalyses dTTP + H2O = dTMP + diphosphate + H(+). The catalysed reaction is UTP + H2O = UMP + diphosphate + H(+). Nucleoside triphosphate pyrophosphatase that hydrolyzes dTTP and UTP. May have a dual role in cell division arrest and in preventing the incorporation of modified nucleotides into cellular nucleic acids. In Brucella abortus (strain 2308), this protein is dTTP/UTP pyrophosphatase.